Reading from the N-terminus, the 310-residue chain is uncharacterized protein (310 aa).

The stretch at 269 to 307 (DLAELERKKSLAEIHKKAAMAKKREEKKKIKQELKKSAK) forms a coiled coil. Positions 290 to 304 (KKREEKKKIKQELKK) are enriched in basic and acidic residues. The disordered stretch occupies residues 290–310 (KKREEKKKIKQELKKSAKGKK).

This is an uncharacterized protein from Magallana gigas (Pacific oyster).